Here is a 175-residue protein sequence, read N- to C-terminus: FOXL2 neighbor protein (175 aa).

Disordered stretches follow at residues 1–39 (MTRT…PALV) and 70–100 (AQKT…GKRR).

This is FOXL2 neighbor protein (FOXL2NB) from Homo sapiens (Human).